Here is a 165-residue protein sequence, read N- to C-terminus: Putative inactive neutral ceramidase B (165 aa).

The protein belongs to the neutral ceramidase family. In terms of tissue distribution, ubiquitous. Expression is reduced with increasing age and in late-onset Alzheimer disease (LOAD) patients. This reduction is even more pronounced in patients with an affected mother.

This is Putative inactive neutral ceramidase B from Homo sapiens (Human).